The primary structure comprises 470 residues: Cysteine--tRNA ligase (470 aa).

Cys-28 is a Zn(2+) binding site. The 'HIGH' region motif lies at 30 to 40; the sequence is PTVYNYIHIGN. Residues Cys-212, His-237, and Glu-241 each contribute to the Zn(2+) site. The short motif at 271–275 is the 'KMSKS' region element; sequence KMSKS. ATP is bound at residue Lys-274.

The protein belongs to the class-I aminoacyl-tRNA synthetase family. Monomer. The cofactor is Zn(2+).

Its subcellular location is the cytoplasm. The enzyme catalyses tRNA(Cys) + L-cysteine + ATP = L-cysteinyl-tRNA(Cys) + AMP + diphosphate. The sequence is that of Cysteine--tRNA ligase from Pediococcus pentosaceus (strain ATCC 25745 / CCUG 21536 / LMG 10740 / 183-1w).